A 493-amino-acid polypeptide reads, in one-letter code: Beta-amyrin 11-oxidase (493 aa).

Residues 7 to 23 (CMSAATLLVCYIFGSKF) traverse the membrane as a helical segment. Heme is bound at residue Cys-439.

The protein belongs to the cytochrome P450 family. The cofactor is heme. Expressed in roots and stolons. Not detected in leaves and stems.

It localises to the membrane. The catalysed reaction is beta-amyrin + 2 reduced [NADPH--hemoprotein reductase] + 2 O2 = 11-oxo-beta-amyrin + 2 oxidized [NADPH--hemoprotein reductase] + 3 H2O + 2 H(+). It catalyses the reaction beta-amyrin + reduced [NADPH--hemoprotein reductase] + O2 = 11alpha-hydroxy-beta-amyrin + oxidized [NADPH--hemoprotein reductase] + H2O + H(+). The enzyme catalyses 11alpha-hydroxy-beta-amyrin + reduced [NADPH--hemoprotein reductase] + O2 = 11-oxo-beta-amyrin + oxidized [NADPH--hemoprotein reductase] + 2 H2O + H(+). Its function is as follows. Involved in the biosynthesis of Glycyrrhetinic acid (GA), a natural product which exhibits anti-inflammatory activity. Catalyzes 2 successive oxidations of beta-amyrin, producing a precursor of the triterpene sweetener glycyrrhizin. Unable to use 11-deoxoglycyrrhetinic acid or ent-kaurenoic acid as substrates. This chain is Beta-amyrin 11-oxidase, found in Glycyrrhiza uralensis (Chinese licorice).